Consider the following 333-residue polypeptide: Glycerol-3-phosphate dehydrogenase [NAD(P)+] (333 aa).

NADPH-binding residues include serine 10, tryptophan 11, histidine 31, arginine 32, and lysine 105. Sn-glycerol 3-phosphate-binding residues include lysine 105, glycine 136, and serine 138. Residue alanine 140 participates in NADPH binding. Sn-glycerol 3-phosphate is bound by residues lysine 191, aspartate 244, serine 254, arginine 255, and asparagine 256. The Proton acceptor role is filled by lysine 191. Arginine 255 is an NADPH binding site. NADPH contacts are provided by isoleucine 279 and glutamate 281.

Belongs to the NAD-dependent glycerol-3-phosphate dehydrogenase family.

It is found in the cytoplasm. The enzyme catalyses sn-glycerol 3-phosphate + NAD(+) = dihydroxyacetone phosphate + NADH + H(+). It carries out the reaction sn-glycerol 3-phosphate + NADP(+) = dihydroxyacetone phosphate + NADPH + H(+). Its pathway is membrane lipid metabolism; glycerophospholipid metabolism. Catalyzes the reduction of the glycolytic intermediate dihydroxyacetone phosphate (DHAP) to sn-glycerol 3-phosphate (G3P), the key precursor for phospholipid synthesis. This is Glycerol-3-phosphate dehydrogenase [NAD(P)+] from Chlorobium luteolum (strain DSM 273 / BCRC 81028 / 2530) (Pelodictyon luteolum).